The chain runs to 249 residues: MGQKVNPTGFRLGIIRDWASRWYDDSPVISEKIKQDHVIRTYVLARLKKERAGIARIIIERTTKHVKINIYAARPGAVVGRKGEEINNLSQELSRITGKEVKIDVVEVVKPEIEAQLIGDNIAYQLENRVSFRRAMKQAIQQAMRSGAEGVRIRCGGRLGGAEIARSEQYKEGKIPLHTIRANVDYASVTAHTIAGTIGIKVWVYKGEVLVQRIDAIEEDELKRIKERRNDAGARNRDSRTKRRHRTKR.

The region spanning 39–109 (IRTYVLARLK…EVKIDVVEVV (71 aa)) is the KH type-2 domain. The segment covering 226–239 (KERRNDAGARNRDS) has biased composition (basic and acidic residues). The interval 226–249 (KERRNDAGARNRDSRTKRRHRTKR) is disordered. Positions 240–249 (RTKRRHRTKR) are enriched in basic residues.

This sequence belongs to the universal ribosomal protein uS3 family. As to quaternary structure, part of the 30S ribosomal subunit. Forms a tight complex with proteins S10 and S14.

Its function is as follows. Binds the lower part of the 30S subunit head. Binds mRNA in the 70S ribosome, positioning it for translation. This chain is Small ribosomal subunit protein uS3, found in Pelodictyon phaeoclathratiforme (strain DSM 5477 / BU-1).